The sequence spans 167 residues: Small heat shock protein C1 (167 aa).

The sHSP domain occupies 59–167 (SLYESNSIKS…EQEAREIVID (109 aa)).

The protein belongs to the small heat shock protein (HSP20) family.

This is Small heat shock protein C1 (hspC1) from Rickettsia conorii (strain ATCC VR-613 / Malish 7).